The primary structure comprises 364 residues: Protein L-Myc (364 aa).

3 disordered regions span residues 41–81 (TSPP…HSKG), 111–172 (DRLA…EIDV), and 219–285 (PPES…KRKN). The span at 228 to 245 (ASERGPQEEVLERDAAGE) shows a compositional bias: basic and acidic residues. One can recognise a bHLH domain in the interval 281–333 (TKRKNHNFLERKRRNDLRSRFLALRDQVPTLASCSKAPKVVILSKALEYLQAL). Residues 333-361 (LVGAEKRMATEKRQLRCRQQQLQKRIAYL) are leucine-zipper.

As to quaternary structure, efficient DNA binding requires dimerization with another bHLH protein. Binds DNA as a heterodimer with MAX.

The protein localises to the nucleus. This Homo sapiens (Human) protein is Protein L-Myc (MYCL).